The following is a 294-amino-acid chain: N-acetylmuramic acid 6-phosphate etherase (294 aa).

In terms of domain architecture, SIS spans 56–219 (TSYSLRNGGR…STLSMVSVGK (164 aa)). The Proton donor role is filled by Glu-84. Glu-115 is a catalytic residue.

This sequence belongs to the GCKR-like family. MurNAc-6-P etherase subfamily. As to quaternary structure, homodimer.

It carries out the reaction N-acetyl-D-muramate 6-phosphate + H2O = N-acetyl-D-glucosamine 6-phosphate + (R)-lactate. It participates in amino-sugar metabolism; 1,6-anhydro-N-acetylmuramate degradation. The protein operates within amino-sugar metabolism; N-acetylmuramate degradation. Its pathway is cell wall biogenesis; peptidoglycan recycling. In terms of biological role, specifically catalyzes the cleavage of the D-lactyl ether substituent of MurNAc 6-phosphate, producing GlcNAc 6-phosphate and D-lactate. Together with AnmK, is also required for the utilization of anhydro-N-acetylmuramic acid (anhMurNAc) either imported from the medium or derived from its own cell wall murein, and thus plays a role in cell wall recycling. This Francisella tularensis subsp. tularensis (strain SCHU S4 / Schu 4) protein is N-acetylmuramic acid 6-phosphate etherase.